The chain runs to 157 residues: Large ribosomal subunit protein uL11 (157 aa).

It belongs to the universal ribosomal protein uL11 family. As to quaternary structure, part of the ribosomal stalk of the 50S ribosomal subunit. Interacts with L10 and the large rRNA to form the base of the stalk. L10 forms an elongated spine to which L12 dimers bind in a sequential fashion forming a multimeric L10(L12)X complex.

Functionally, forms part of the ribosomal stalk which helps the ribosome interact with GTP-bound translation factors. The sequence is that of Large ribosomal subunit protein uL11 from Methanocorpusculum labreanum (strain ATCC 43576 / DSM 4855 / Z).